The chain runs to 125 residues: CLAVATA3/ESR (CLE)-related protein ESR3 (125 aa).

The N-terminal stretch at 1–26 (MASRMGMVAIMSLFVYAIVVPTSVNA) is a signal peptide. A disordered region spans residues 45-125 (QQQGGFIGHR…IGPPPLPDRY (81 aa)). 2 positions are modified to hydroxyproline: P75 and P78. The O-linked (Ara...) hydroxyproline glycan is linked to P78.

The protein belongs to the CLV3/ESR signal peptide family. Post-translationally, the O-glycosylation (arabinosylation) of the hydroxyproline Pro-78 enhances binding affinity of the ESR3p peptide for its receptor. As to expression, seed endosperm.

It localises to the secreted. Its subcellular location is the extracellular space. In terms of biological role, extracellular signal peptide that regulates cell fate. The sequence is that of CLAVATA3/ESR (CLE)-related protein ESR3 from Zea mays (Maize).